The chain runs to 644 residues: Phosphatidylinositol polyphosphate 5-phosphatase type IV (644 aa).

The segment at 1-193 is disordered; the sequence is MPSKAENLRP…RLPSLLPPRP (193 aa). A run of 8 repeats spans residues 10-13, 15-18, 28-31, 39-42, 55-58, 69-71, 72-74, and 75-78. The 13 X 4 AA repeats of P-X-X-P stretch occupies residues 10-242; that stretch reads PSEPAPQPPE…SLGPGRPRSP (233 aa). Residues 78–90 are compositionally biased toward basic and acidic residues; the sequence is PRLERALSLDDKG. Ser-99 carries the phosphoserine modification. Polar residues predominate over residues 107 to 118; sequence NGTSPSRGSVQS. Copy 9 of the repeat occupies 121-124; the sequence is PGAP. The span at 152–163 shows a compositional bias: low complexity; sequence GSPSSGGNPLSG. Repeat copies occupy residues 169 to 172, 183 to 185, 190 to 193, and 236 to 239. A phosphoserine mark is found at Ser-241 and Ser-256. Residue Cys-641 is modified to Cysteine methyl ester. The S-farnesyl cysteine moiety is linked to residue Cys-641. A propeptide spans 642-644 (removed in mature form); that stretch reads SVS.

The protein belongs to the inositol 1,4,5-trisphosphate 5-phosphatase type IV family. In terms of assembly, interacts (when prenylated) with PDE6D; this is important for normal location in cilia. As to expression, detected in brain, heart, pancreas, testis and spleen.

It localises to the cytoplasm. The protein resides in the cytoskeleton. It is found in the cilium axoneme. Its subcellular location is the golgi apparatus. The protein localises to the golgi stack membrane. It localises to the cell membrane. The protein resides in the cell projection. It is found in the ruffle. Its subcellular location is the nucleus. It catalyses the reaction a 1,2-diacyl-sn-glycero-3-phospho-(1D-myo-inositol-4,5-bisphosphate) + H2O = a 1,2-diacyl-sn-glycero-3-phospho-(1D-myo-inositol 4-phosphate) + phosphate. The enzyme catalyses a 1,2-diacyl-sn-glycero-3-phospho-(1D-myo-inositol-3,4,5-trisphosphate) + H2O = a 1,2-diacyl-sn-glycero-3-phospho-(1D-myo-inositol-3,4-bisphosphate) + phosphate. The catalysed reaction is a 1,2-diacyl-sn-glycero-3-phospho-(1D-myo-inositol-3,5-bisphosphate) + H2O = a 1,2-diacyl-sn-glycero-3-phospho-(1D-myo-inositol-3-phosphate) + phosphate. Its activity is regulated as follows. Active in the presence of octyl-glucoside or Triton X-100, but completely inhibited by CTAB. Its function is as follows. Phosphatidylinositol (PtdIns) phosphatase that specifically hydrolyzes the 5-phosphate of phosphatidylinositol-3,4,5-trisphosphate (PtdIns(3,4,5)P3), phosphatidylinositol 4,5-bisphosphate (PtdIns(4,5)P2) and phosphatidylinositol 3,5-bisphosphate (PtdIns(3,5)P2). Specific for lipid substrates, inactive towards water soluble inositol phosphates. Plays an essential role in the primary cilium by controlling ciliary growth and phosphoinositide 3-kinase (PI3K) signaling and stability. The chain is Phosphatidylinositol polyphosphate 5-phosphatase type IV (INPP5E) from Homo sapiens (Human).